A 284-amino-acid chain; its full sequence is Glutamate 5-kinase 2 (284 aa).

Lysine 26 serves as a coordination point for ATP. The substrate site is built by serine 67, aspartate 154, and asparagine 166. Residues 186 to 187 (SD) and 228 to 234 (SGGMVTK) each bind ATP.

Belongs to the glutamate 5-kinase family.

It is found in the cytoplasm. The enzyme catalyses L-glutamate + ATP = L-glutamyl 5-phosphate + ADP. The protein operates within amino-acid biosynthesis; L-proline biosynthesis; L-glutamate 5-semialdehyde from L-glutamate: step 1/2. Functionally, catalyzes the transfer of a phosphate group to glutamate to form L-glutamate 5-phosphate. The sequence is that of Glutamate 5-kinase 2 from Mesorhizobium japonicum (strain LMG 29417 / CECT 9101 / MAFF 303099) (Mesorhizobium loti (strain MAFF 303099)).